A 229-amino-acid polypeptide reads, in one-letter code: Heptaprenylglyceryl phosphate synthase (229 aa).

Residue lysine 12 participates in sn-glycerol 1-phosphate binding. Residues aspartate 14 and serine 40 each coordinate Mg(2+). Residues tyrosine 159 to glycine 164, glycine 189, and glycine 209 to asparagine 210 each bind sn-glycerol 1-phosphate.

The protein belongs to the GGGP/HepGP synthase family. Group I subfamily. As to quaternary structure, homodimer. The cofactor is Mg(2+).

The catalysed reaction is sn-glycerol 1-phosphate + all-trans-heptaprenyl diphosphate = 3-heptaprenyl-sn-glycero-1-phosphate + diphosphate. The protein operates within membrane lipid metabolism; glycerophospholipid metabolism. In terms of biological role, prenyltransferase that catalyzes in vivo the transfer of the heptaprenyl moiety of heptaprenyl pyrophosphate (HepPP; 35 carbon atoms) to the C3 hydroxyl of sn-glycerol-1-phosphate (G1P), producing heptaprenylglyceryl phosphate (HepGP). This reaction is an ether-bond-formation step in the biosynthesis of archaea-type G1P-based membrane lipids found in Bacillales. In Bacillus cytotoxicus (strain DSM 22905 / CIP 110041 / 391-98 / NVH 391-98), this protein is Heptaprenylglyceryl phosphate synthase.